The primary structure comprises 275 residues: NH(3)-dependent NAD(+) synthetase (275 aa).

ATP is bound at residue Gly50–Ser57. Asp56 contributes to the Mg(2+) binding site. Arg147 provides a ligand contact to deamido-NAD(+). Thr167 lines the ATP pocket. Residue Glu172 participates in Mg(2+) binding. Lys180 and Asp187 together coordinate deamido-NAD(+). 2 residues coordinate ATP: Lys196 and Thr218. Residue His267–Lys268 participates in deamido-NAD(+) binding.

It belongs to the NAD synthetase family. Homodimer.

The catalysed reaction is deamido-NAD(+) + NH4(+) + ATP = AMP + diphosphate + NAD(+) + H(+). It functions in the pathway cofactor biosynthesis; NAD(+) biosynthesis; NAD(+) from deamido-NAD(+) (ammonia route): step 1/1. Its function is as follows. Catalyzes the ATP-dependent amidation of deamido-NAD to form NAD. Uses ammonia as a nitrogen source. The chain is NH(3)-dependent NAD(+) synthetase from Pseudomonas syringae pv. syringae (strain B728a).